The chain runs to 146 residues: MLLQGTHRIGRMAMLLALADENESPVLSIPKGWKYCTGKVGSMNSQKVVAAMETAAKSNQVIETDVYRETHALYHAIMEALYGVTRGQIQLADVLRTVGLRFAIVRGRPYDGKKEGEWVAVALYGTIGAPVKGSEHEAIGLGINHI.

The protein belongs to the HutP family. Homohexamer.

Antiterminator that binds to cis-acting regulatory sequences on the mRNA in the presence of histidine, thereby suppressing transcription termination and activating the hut operon for histidine utilization. The protein is Hut operon positive regulatory protein of Bacillus cereus (strain G9842).